The following is a 291-amino-acid chain: Small ribosomal subunit biogenesis GTPase RsgA (291 aa).

The region spanning 63–221 (ENELKRPPVS…IADTPGFSAL (159 aa)) is the CP-type G domain. GTP contacts are provided by residues 112–115 (TKKD) and 164–172 (GQSGVGKST). Zn(2+) is bound by residues cysteine 245, cysteine 250, histidine 252, and cysteine 258.

Belongs to the TRAFAC class YlqF/YawG GTPase family. RsgA subfamily. As to quaternary structure, monomer. Associates with 30S ribosomal subunit, binds 16S rRNA. Requires Zn(2+) as cofactor.

Its subcellular location is the cytoplasm. Its function is as follows. One of several proteins that assist in the late maturation steps of the functional core of the 30S ribosomal subunit. Helps release RbfA from mature subunits. May play a role in the assembly of ribosomal proteins into the subunit. Circularly permuted GTPase that catalyzes slow GTP hydrolysis, GTPase activity is stimulated by the 30S ribosomal subunit. This is Small ribosomal subunit biogenesis GTPase RsgA from Staphylococcus aureus (strain COL).